The primary structure comprises 255 residues: Proteasome subunit alpha type-3 (255 aa).

Residue Ser-2 is modified to N-acetylserine. N6-acetyllysine occurs at positions 57, 206, and 230. 2 positions are modified to phosphoserine: Ser-243 and Ser-250.

Belongs to the peptidase T1A family. The 26S proteasome consists of a 20S proteasome core and two 19S regulatory subunits. The 20S proteasome core is a barrel-shaped complex made of 28 subunits that are arranged in four stacked rings. The two outer rings are each formed by seven alpha subunits, and the two inner rings are formed by seven beta subunits. The proteolytic activity is exerted by three beta-subunits PSMB5, PSMB6 and PSMB7. Interacts with AURKB. Interacts with CDKN1A. Interacts with MDM2 and RB1. Interacts with the C-terminus of TBXA2R isoform 2. Interacts with DNAJB2.

Its subcellular location is the cytoplasm. It localises to the nucleus. Its function is as follows. Component of the 20S core proteasome complex involved in the proteolytic degradation of most intracellular proteins. This complex plays numerous essential roles within the cell by associating with different regulatory particles. Associated with two 19S regulatory particles, forms the 26S proteasome and thus participates in the ATP-dependent degradation of ubiquitinated proteins. The 26S proteasome plays a key role in the maintenance of protein homeostasis by removing misfolded or damaged proteins that could impair cellular functions, and by removing proteins whose functions are no longer required. Associated with the PA200 or PA28, the 20S proteasome mediates ubiquitin-independent protein degradation. This type of proteolysis is required in several pathways including spermatogenesis (20S-PA200 complex) or generation of a subset of MHC class I-presented antigenic peptides (20S-PA28 complex). Binds to the C-terminus of CDKN1A and thereby mediates its degradation. Negatively regulates the membrane trafficking of the cell-surface thromboxane A2 receptor (TBXA2R) isoform 2. This Bos taurus (Bovine) protein is Proteasome subunit alpha type-3 (PSMA3).